The following is a 64-amino-acid chain: Endodeoxyribonuclease toxin RalR (64 aa).

It depends on Ca(2+) as a cofactor. Mg(2+) is required as a cofactor.

Its activity is regulated as follows. Inhibited by EDTA. Its function is as follows. Toxic component of a type I toxin-antitoxin (TA) system. Upon overexpression inhibits growth and reduces colony-forming units in both the presence and absence of the Rac prophage, cells become filamentous. Has deoxyribonuclease activity (probably endonucleolytic), does not digest RNA. Its toxic effects are neutralized by sRNA antitoxin RalA, which is encoded in trans on the opposite DNA strand. Has RAL-like activity. The polypeptide is Endodeoxyribonuclease toxin RalR (ralR) (Escherichia coli (strain K12)).